We begin with the raw amino-acid sequence, 295 residues long: 33 kDa chaperonin (295 aa).

Intrachain disulfides connect C236–C238 and C269–C272.

This sequence belongs to the HSP33 family. Post-translationally, under oxidizing conditions two disulfide bonds are formed involving the reactive cysteines. Under reducing conditions zinc is bound to the reactive cysteines and the protein is inactive.

The protein localises to the cytoplasm. Redox regulated molecular chaperone. Protects both thermally unfolding and oxidatively damaged proteins from irreversible aggregation. Plays an important role in the bacterial defense system toward oxidative stress. This chain is 33 kDa chaperonin, found in Citrifermentans bemidjiense (strain ATCC BAA-1014 / DSM 16622 / JCM 12645 / Bem) (Geobacter bemidjiensis).